A 744-amino-acid polypeptide reads, in one-letter code: MSISTSTLGYPRIGKNREVKKALESFWQQKISADELLKIVREIEEASWQTQTKAGIERIGIGDATLYDQILDWSFRFGIIPKRFQQFQNLECYFAMARGKDGILALEMTKWFDTNYHYLVPEITPDITPKADFSDFLETVKRAKKIIGKSAVPIIISPITFIRLSRLESVEFDNILAQLLPLYSDLLTKLKKLGISEIQLHEPALVFGDSSNLKKQFEMAYAELAKVGLNIHLVTYFDDLGETYPWVMKLPVTSISLDLTRGQNLELIKSYGFPADKTLGAGVVDARNIWRIRTQEVTSLLEELKGIIPNISVQPSASLQFVPYDVRREVKLPEALRNVLSFAEQKLEETVLLSKALTGKSNKSEIENIEIYWQEFYKFSPANEKVKSQIKALKETDFRRSMSYLERLDNQIKLPAFPTTTIGSFPQTKQVRKLRARYKKGELTQAEYLAQIDANIAYCIGLQEGMGMDVLVHGEFERSDMVEYFGEQLDGYTFTTHGWVQSYGSRYVRPPIIFGDIYRPHAMTIREFEVAQSLTEKPVKGMLTGPVTMLNWSYPRTDISRQEQAFQLALAIREELKDLEKAGAAFIQVDEPAMREGLPLKQQRWHEYLNWAVDAFRLSTAIARPETQVHTHMCYSEFGDIMESIKQLDADVISIEDSRSNNETLMQLTDADYPAQVGPGVYDVHSPSIPTTEYLRESLYKCIQYLPVTQIWVNPDCGLKTRRWEEAIPATRNMVQAAISLRQE.

Residues 17 to 20 (REVK) and lysine 110 contribute to the 5-methyltetrahydropteroyltri-L-glutamate site. L-homocysteine is bound by residues 422–424 (IGS) and glutamate 475. L-methionine is bound by residues 422-424 (IGS) and glutamate 475. Tryptophan 552 lines the 5-methyltetrahydropteroyltri-L-glutamate pocket. Residue aspartate 590 participates in L-homocysteine binding. L-methionine is bound at residue aspartate 590. Glutamate 596 provides a ligand contact to 5-methyltetrahydropteroyltri-L-glutamate. The Zn(2+) site is built by histidine 632, cysteine 634, and glutamate 656. The Proton donor role is filled by histidine 685. Cysteine 717 is a binding site for Zn(2+).

It belongs to the vitamin-B12 independent methionine synthase family. Zn(2+) serves as cofactor.

The enzyme catalyses 5-methyltetrahydropteroyltri-L-glutamate + L-homocysteine = tetrahydropteroyltri-L-glutamate + L-methionine. It participates in amino-acid biosynthesis; L-methionine biosynthesis via de novo pathway; L-methionine from L-homocysteine (MetE route): step 1/1. Catalyzes the transfer of a methyl group from 5-methyltetrahydrofolate to homocysteine resulting in methionine formation. The sequence is that of 5-methyltetrahydropteroyltriglutamate--homocysteine methyltransferase from Trichodesmium erythraeum (strain IMS101).